The sequence spans 462 residues: N-myc proto-oncogene protein (462 aa).

The interval 19–47 (LEFDSLQPCFYPDEDDFYFGGPDSTPPGE) is interaction with AURKA. The tract at residues 61 to 90 (LSPSRAFPEHSPEPSNWATEMLLPEADLWG) is interaction with AURKA and FBXW7. The 9aaTAD signature appears at 76 to 85 (NWATEMLLPE). 3 disordered regions span residues 134–177 (KLQH…ATLP), 232–289 (AAPA…SSNN), and 332–390 (APSP…LERQ). Composition is skewed to low complexity over residues 143–176 (GVSSACSAPGVGASSPGGRALGGSSSASHTGATL) and 232–244 (AAPARAGGRPASS). Positions 257–276 (TLSDSDDEDDEEEDEEEEID) are enriched in acidic residues. A phosphoserine; by CK2 mark is found at serine 259 and serine 261. Residues 379–431 (ERRRNHNILERQRRNDLRSSFLTLRDHVPELVKNEKAAKVVILKKATEYVHAL) enclose the bHLH domain. Residues 431 to 452 (LQANEHQLLLEKEKLQARQQQL) are leucine-zipper.

Efficient DNA binding requires dimerization with another bHLH protein. Binds DNA as a heterodimer with MAX. Interacts with KDM5A, KDM5B and HUWE1. Interacts with MYCNOS. Interacts with AURKA; interaction is phospho-independent and triggers AURKA activation; AURKA competes with FBXW7 for binding to unphosphorylated MYCN but not for binding to unphosphorylated MYCN. Interacts with FBXW7; FBXW7 competes with AURKA for binding to unphosphorylated MYCN but not for binding to phosphorylated MYCN. Phosphorylated by GSK3-beta which may promote its degradation. Phosphorylated by AURKA.

It localises to the nucleus. Positively regulates the transcription of MYCNOS in neuroblastoma cells. In Mus musculus (Mouse), this protein is N-myc proto-oncogene protein (Mycn).